The sequence spans 435 residues: MELKNKKLSLWEAVSMAVGVMIGASIFSIFGVGAKIAGRNLPETFILSGIYALLVAYSYTKLGAKIVSNAGPIAFIHKAIGDNIITGALSILLWMSYVISIALFAKGFAGYFLPLINAPINTFNIAITEIGIVAFFTALNFFGSKAVGRAEFFIVLVKLLILGLFIFAGLITIHPSYVIPDLAPSAVSGMIFASAIFFLSYMGFGVITNASEHIENPKKNVPRAIFISILIVMFVYVGVAISAIGNLPIDELIKASENALAVAAKPFLGNLGFLLISIGALFSISSAMNATIYGGANVAYSLAKDGELPEFFERKVWFKSTEGLYITSALGVLFALLFNMEGVASITSAVFMVIYLFVILSHYILIDEVGGRKEIVIFSFIVVLGVFLLLLYYQWITNRFVFYGIIATFIGVLIFEIIYRKVTKRTFSNNMYVKS.

12 helical membrane-spanning segments follow: residues 14 to 34, 44 to 64, 84 to 104, 123 to 143, 153 to 173, 187 to 207, 224 to 244, 267 to 287, 324 to 344, 346 to 366, 375 to 395, and 400 to 420; these read VSMA…GVGA, TFIL…KLGA, IITG…IALF, FNIA…NFFG, FIVL…LITI, VSGM…FGVI, AIFI…ISAI, FLGN…ISSA, LYIT…EGVA, ITSA…YILI, IVIF…YYQW, and FVFY…IIYR.

Its subcellular location is the cell membrane. This is an uncharacterized protein from Methanocaldococcus jannaschii (strain ATCC 43067 / DSM 2661 / JAL-1 / JCM 10045 / NBRC 100440) (Methanococcus jannaschii).